The following is a 1938-amino-acid chain: Histone-lysine N-methyltransferase SETD1B (1938 aa).

Over residues 1 to 20 (MSFKEAKPGERGKNPEDHGR) the composition is skewed to basic and acidic residues. Residues 1–44 (MSFKEAKPGERGKNPEDHGRKQAASWMNGMEAANQPSTSAEKKS) form a disordered region. Residues 111–199 (DEFYVGPVPP…NIIHAELDTK (89 aa)) enclose the RRM domain. Disordered stretches follow at residues 226–357 (LDAS…ENTF), 369–484 (FPRT…TRIA), 496–630 (LISS…EVTP), 652–688 (GFPPLPPPPPPQSGFPMPPPLPPPPPPTHPSVTVPPP), 916–1125 (KEPP…SSPV), 1147–1174 (HQTAQDTSHLRKKDLDVPLVESKEHKQD), 1187–1206 (MQQNVFKEHEKAPSPMNEEE), 1327–1373 (KTLS…GNSL), 1413–1468 (FPES…VPHM), 1496–1528 (ECEFTKGQLPSTDESAPSPPFPPTDKRKGPKKP), and 1744–1772 (DEPPIDTQGKSIPAQPQASTRAGSERRSE). 4 stretches are compositionally biased toward polar residues: residues 254 to 290 (VTPNSSTPFSHDTAYSSSRQGTPNSYSQFTPQSQGTP), 298 to 312 (PFSQDSSYSSRQTTP), 375 to 407 (LSHSSGNNKSAFSPYQGSTVFPQTDDNQYPQTS), and 446 to 457 (DSTTEQKASFAQ). Residues 512 to 531 (SPISSSSSQLSPIPPYSSSS) are compositionally biased toward low complexity. 2 stretches are compositionally biased toward polar residues: residues 532–546 (HYQDVTPSSRPSSTG) and 569–585 (SLCQNSRSASPIDQINQ). A compositionally biased stretch (basic and acidic residues) spans 588–599 (RKMETLDNKELV). Residues 619 to 628 (EDMEISDDEV) show a composition bias toward acidic residues. 2 stretches are compositionally biased toward acidic residues: residues 976–990 (SEGEEEVESEGDDGE) and 1054–1114 (DSSD…EDFF). The segment covering 1159–1174 (KDLDVPLVESKEHKQD) has biased composition (basic and acidic residues). A compositionally biased stretch (basic and acidic residues) spans 1329–1343 (LSEEELPRTPGRDIL). Composition is skewed to polar residues over residues 1349–1358 (LGKSQSTETI) and 1441–1453 (EPTSASLTMNSVP). Residues 1454-1464 (SPIPFASPPRG) show a composition bias toward pro residues. The span at 1751-1765 (QGKSIPAQPQASTRA) shows a compositional bias: polar residues. A RxxxRR motif motif is present at residues 1770–1775 (RSEQRR). Residues 1799–1916 (KKIRFCKSHI…VNEEITYDYK (118 aa)) form the SET domain. Tyrosine 1915 contributes to the S-adenosyl-L-methionine binding site. Residues 1922-1938 (VKIPCLCGAENCRGTLN) form the Post-SET domain.

This sequence belongs to the class V-like SAM-binding methyltransferase superfamily. As to quaternary structure, component of the SET1B/COMPASS complex.

The protein localises to the nucleus speckle. The protein resides in the chromosome. The enzyme catalyses L-lysyl(4)-[histone H3] + 3 S-adenosyl-L-methionine = N(6),N(6),N(6)-trimethyl-L-lysyl(4)-[histone H3] + 3 S-adenosyl-L-homocysteine + 3 H(+). In terms of biological role, histone methyltransferase that specifically methylates 'Lys-4' of histone H3, when part of the SET1 histone methyltransferase (HMT) complex, but not if the neighboring 'Lys-9' residue is already methylated. H3 'Lys-4' methylation represents a specific tag for epigenetic transcriptional activation. The chain is Histone-lysine N-methyltransferase SETD1B (setd1b) from Xenopus laevis (African clawed frog).